The sequence spans 122 residues: Large ribosomal subunit protein uL14 (122 aa).

Belongs to the universal ribosomal protein uL14 family. In terms of assembly, part of the 50S ribosomal subunit. Forms a cluster with proteins L3 and L19. In the 70S ribosome, L14 and L19 interact and together make contacts with the 16S rRNA in bridges B5 and B8.

Functionally, binds to 23S rRNA. Forms part of two intersubunit bridges in the 70S ribosome. The sequence is that of Large ribosomal subunit protein uL14 from Jannaschia sp. (strain CCS1).